We begin with the raw amino-acid sequence, 844 residues long: RNA-directed RNA polymerase (844 aa).

248 to 255 (GLPYIGKT) contributes to the GTP binding site. Positions 384-588 (MIYADNIYIL…ENERLIASVA (205 aa)) constitute a RdRp catalytic domain. Residues 820-844 (EFSEKIPLTPTQKKNAKRREKQRRN) are disordered. Over residues 833–844 (KNAKRREKQRRN) the composition is skewed to basic residues.

As to quaternary structure, interacts with VP3 in the cytoplasm. Post-translationally, exists in multiple phosphorylated forms.

The protein localises to the virion. The catalysed reaction is RNA(n) + a ribonucleoside 5'-triphosphate = RNA(n+1) + diphosphate. Its function is as follows. RNA-dependent RNA polymerase which is found both free and covalently attached to the genomic RNA. May also contain guanylyl and methyl transferase activities. This chain is RNA-directed RNA polymerase (VP1), found in Infectious pancreatic necrosis virus (strain Sp) (IPNV).